A 70-amino-acid chain; its full sequence is NADH dehydrogenase [ubiquinone] 1 alpha subcomplex subunit 1 (70 aa).

Residues 1-21 traverse the membrane as a helical segment; the sequence is MWFEILPGLSVMGVCLLIPGL.

It belongs to the complex I NDUFA1 subunit family. Complex I is composed of 45 different subunits. As to expression, primarily expressed in heart and skeletal muscle.

It localises to the mitochondrion inner membrane. Functionally, accessory subunit of the mitochondrial membrane respiratory chain NADH dehydrogenase (Complex I), that is believed not to be involved in catalysis. Complex I functions in the transfer of electrons from NADH to the respiratory chain. The immediate electron acceptor for the enzyme is believed to be ubiquinone. The chain is NADH dehydrogenase [ubiquinone] 1 alpha subcomplex subunit 1 (NDUFA1) from Homo sapiens (Human).